The sequence spans 796 residues: MPTTQQSPQDEQEKLLDEAIQAVKVQSFQMKRCLDKNKLMDALKHASNMLGELRTSMLSPKSYYELYMAISDELHYLEVYLTDEFAKGRKVADLYELVQYAGNIIPRLYLLITVGVVYVKSFPQSRKDILKDLVEMCRGVQHPLRGLFLRNYLLQCTRNILPDEGEPTDEETTGDISDSMDFVLLNFAEMNKLWVRMQHQGHSRDREKRERERQELRILVGTNLVRLSQLEGVNVERYKQIVLTGILEQVVNCRDALAQEYLMECIIQVFPDEFHLQTLNPFLRACAELHQNVNVKNIIIALIDRLALFAHREDGPGIPAEIKLFDIFSQQVATVIQSRQDMPSEDVVSLQVSLINLAMKCYPDRVDYVDKVLETTVEIFNKLNLEHIATSSAVSKELTRLLKIPVDTYNNILTVLKLKHFHPLFEYFDYESRKSMSCYVLSNVLDYNTEIVSQDQVDSIMNLVSTLIQDQPDQPVEDPDPEDFADEQSLVGRFIHLLRSDDPDQQYLILNTARKHFGAGGNQRIRFTLPPLVFAAYQLAFRYKENSQMDDKWEKKCQKIFSFAHQTISALIKAELAELPLRLFLQGALAAGEIGFENHETVAYEFMSQAFSLYEDEISDSKAQLAAITLIIGTFERMKCFSEENHEPLRTQCALAASKLLKKPDQGRAVSTCAHLFWSGRNTDKNGEELHGGKRVMECLKKALKIANQCMDPSLQVQLFIEILNRYIYFYEKENDAVTIQVLNQLIQKIREDLPNLESSEETEQINKHFHNTLEHLRSRRESPESEGPIYEGLIL.

Residue serine 7 is modified to Phosphoserine. Interaction with SNX3 stretches follow at residues 25-44 and 205-215; these read VQSFQMKRCLDKNKLMDALK and DREKRERERQE. Positions 438–796 are interaction with SLC11A2; the sequence is CYVLSNVLDY…EGPIYEGLIL (359 aa). The tract at residues 500–693 is interaction with IGF2R cytoplasmic domain; the sequence is SDDPDQQYLI…DKNGEELHGG (194 aa). The segment at 776 to 796 is disordered; sequence HLRSRRESPESEGPIYEGLIL. Serine 783 is modified (phosphoserine). Tyrosine 791 carries the post-translational modification Phosphotyrosine.

It belongs to the VPS35 family. Component of the heterotrimeric retromer cargo-selective complex (CSC), also described as vacuolar protein sorting subcomplex (VPS) formed by VPS26 (VPS26A or VPS26B), VPS29 and VPS35. The CSC has a highly elongated structure with VPS26 and VPS29 binding independently at opposite distal ends of VPS35 as central platform. The CSC is believed to associate with variable sorting nexins to form functionally distinct retromer complex variants. The originally described retromer complex (also called SNX-BAR retromer) is a pentamer containing the CSC and a heterodimeric membrane-deforming subcomplex formed between SNX1 or SNX2 and SNX5 or SNX6 (also called SNX-BAR subcomplex); the affinity between the respective CSC and SNX-BAR subcomplexes is low. The CSC associates with SNX3 to form a SNX3-retromer complex. The CSC associates with SNX27, the WASH complex and the SNX-BAR subcomplex to form the SNX27-retromer complex. Interacts with VPS26A, VPS29, VPS26B and LRRK2. Interacts with SNX1, SNX2, IGF2R, SNX3, GOLPH3, SLC11A2, WASHC2, FKBP15, WASHC1, EHD1. Interacts with MAGEL2; leading to recruitment of the TRIM27:MAGEL2 E3 ubiquitin ligase complex retromer-containing endosomes. Interacts with SORCS2. Detected in striatum (at protein level). Ubiquitous. Highly expressed in fat tissue, testis, brain, kidney, thymus, liver and pancreas, and at lower levels in heart, intestine and skeletal muscle. Detected in oocytes, pre-implantation embryos and at 6.5-12.5 dpc.

It is found in the cytoplasm. The protein resides in the membrane. It localises to the endosome. The protein localises to the early endosome. Its subcellular location is the late endosome. Its function is as follows. Acts as a component of the retromer cargo-selective complex (CSC). The CSC is believed to be the core functional component of retromer or respective retromer complex variants acting to prevent missorting of selected transmembrane cargo proteins into the lysosomal degradation pathway. The recruitment of the CSC to the endosomal membrane involves RAB7A and SNX3. The CSC seems to associate with the cytoplasmic domain of cargo proteins predominantly via VPS35; however, these interactions seem to be of low affinity and retromer SNX proteins may also contribute to cargo selectivity thus questioning the classical function of the CSC. The SNX-BAR retromer mediates retrograde transport of cargo proteins from endosomes to the trans-Golgi network (TGN) and is involved in endosome-to-plasma membrane transport for cargo protein recycling. The SNX3-retromer mediates the retrograde transport of WLS distinct from the SNX-BAR retromer pathway. The SNX27-retromer is believed to be involved in endosome-to-plasma membrane trafficking and recycling of a broad spectrum of cargo proteins. The CSC seems to act as recruitment hub for other proteins, such as the WASH complex and TBC1D5. Required for retrograde transport of lysosomal enzyme receptor IGF2R and SLC11A2. Required to regulate transcytosis of the polymeric immunoglobulin receptor (pIgR-pIgA). Required for endosomal localization of WASHC2 and mediates the association of the CSC with the WASH complex. This is Vacuolar protein sorting-associated protein 35 (Vps35) from Mus musculus (Mouse).